Reading from the N-terminus, the 294-residue chain is Protein huluwa (294 aa).

The Extracellular segment spans residues 1–23 (MSQLGSAVPSSNLPEGLPVSSLA). A helical transmembrane segment spans residues 24-44 (LLILVLIPCVLLLLLLNCLFV). The Cytoplasmic segment spans residues 45-294 (GYKLFRMTRR…PPITTKQYWV (250 aa)). Residues 154–175 (SDSDMERVNTVPPNSPVLRVTP) are disordered. The VPPNSP motif motif lies at 164-169 (VPPNSP). The SLRRSST motif signature appears at 184–190 (SLRRSST).

The protein belongs to the huluwa family. Interacts with axin1; leading to promote the tankyrase-mediated degradation of axin. Interacts with axin2; leading to promote the tankyrase-mediated degradation of axin.

The protein resides in the cell membrane. In terms of biological role, key maternal determinant of the dorsal organizer and body axis formation in vertebrates that acts by promoting stabilization of beta-catenin (ctnnb1). Localizes on the plasma membrane of the future dorsal blastomeres in early blastulas and binds to and promotes the tankyrase-mediated degradation of axin (axin1 and axin2). Axin degradation results in stabilization and nuclear translocation of beta-catenin (ctnnb1) for activating organizer-specific target gene expression. This is Protein huluwa from Danio rerio (Zebrafish).